The following is a 637-amino-acid chain: Sodium-dependent phosphate transport protein 2A (637 aa).

At M1–K103 the chain is on the cytoplasmic side. Residues S14 and S34 each carry the phosphoserine modification. The chain crosses the membrane as a helical span at residues V104–F125. Over Q126 to N145 the chain is Extracellular. The chain crosses the membrane as a helical span at residues P146–S163. The Cytoplasmic segment spans residues S164–T165. A helical membrane pass occupies residues S166–I185. Residues P186–D345 are Extracellular-facing. Disulfide bonds link C225/C520 and C306/C334. 2 N-linked (GlcNAc...) asparagine glycosylation sites follow: N298 and N328. The chain crosses the membrane as a helical span at residues L346–V368. Topologically, residues K369–M410 are cytoplasmic. The helical transmembrane segment at T411–S434 threads the bilayer. The Extracellular portion of the chain corresponds to I435 to K464. Residues L465–L485 traverse the membrane as a helical segment. At W486–W511 the chain is on the cytoplasmic side. Position 506 is a phosphothreonine; by PKC (T506). A helical membrane pass occupies residues F512–S532. Over M533–Q537 the chain is Extracellular. Residues A538–L559 traverse the membrane as a helical segment. The Cytoplasmic segment spans residues Q560 to L637. Position 605 is a phosphoserine (S605). Phosphothreonine is present on T621. The residue at position 623 (S623) is a Phosphoserine.

This sequence belongs to the SLC34A transporter family. In terms of assembly, interacts via its C-terminal region with NHERF4. Interacts with NHERF1. Interacts with TMEM174; regulates SLC34A1 internalization by PTH and FGF23. In terms of tissue distribution, kidney.

It localises to the apical cell membrane. Its subcellular location is the cell membrane. The enzyme catalyses 3 Na(+)(out) + phosphate(out) = 3 Na(+)(in) + phosphate(in). Functionally, involved in actively transporting phosphate into cells via Na(+) cotransport in the renal brush border membrane. The cotransport has a Na(+):Pi stoichiometry of 3:1 and is electrogenic. The protein is Sodium-dependent phosphate transport protein 2A of Mus musculus (Mouse).